A 135-amino-acid chain; its full sequence is Sex-regulated protein janus-A (135 aa).

Substrate is bound at residue lysine 37. Histidine 63 (proton acceptor) is an active-site residue. 104 to 106 (SQG) provides a ligand contact to substrate.

The protein belongs to the janus family.

In terms of biological role, janA and janB regulate somatic sex differentiation. This chain is Sex-regulated protein janus-A (janA), found in Drosophila orena (Fruit fly).